We begin with the raw amino-acid sequence, 356 residues long: Malate dehydrogenase, glyoxysomal (356 aa).

The transit peptide at 1–36 (MQPIPDVNQRIARISAHLHPPKSQMEESSALRRANC) directs the protein to the glyoxysome. Residues 51–57 (GAAGGIG) and D77 each bind NAD(+). Residues R124 and R130 each contribute to the substrate site. Residues N137 and 160–162 (ISN) each bind NAD(+). Substrate is bound by residues N162 and R196. The active-site Proton acceptor is the H220. Residue M271 coordinates NAD(+).

The protein belongs to the LDH/MDH superfamily. MDH type 1 family. As to quaternary structure, homodimer.

The protein localises to the glyoxysome. It carries out the reaction (S)-malate + NAD(+) = oxaloacetate + NADH + H(+). The protein is Malate dehydrogenase, glyoxysomal of Citrullus lanatus (Watermelon).